The chain runs to 139 residues: Nucleoside diphosphate kinase (139 aa).

6 residues coordinate ATP: lysine 10, phenylalanine 58, arginine 86, threonine 92, arginine 103, and asparagine 113. The active-site Pros-phosphohistidine intermediate is histidine 116.

Belongs to the NDK family. Homotetramer. It depends on Mg(2+) as a cofactor.

Its subcellular location is the cytoplasm. The enzyme catalyses a 2'-deoxyribonucleoside 5'-diphosphate + ATP = a 2'-deoxyribonucleoside 5'-triphosphate + ADP. The catalysed reaction is a ribonucleoside 5'-diphosphate + ATP = a ribonucleoside 5'-triphosphate + ADP. Major role in the synthesis of nucleoside triphosphates other than ATP. The ATP gamma phosphate is transferred to the NDP beta phosphate via a ping-pong mechanism, using a phosphorylated active-site intermediate. This is Nucleoside diphosphate kinase from Oleidesulfovibrio alaskensis (strain ATCC BAA-1058 / DSM 17464 / G20) (Desulfovibrio alaskensis).